A 201-amino-acid chain; its full sequence is NADH-quinone oxidoreductase subunit C (201 aa).

It belongs to the complex I 30 kDa subunit family. As to quaternary structure, NDH-1 is composed of 14 different subunits. Subunits NuoB, C, D, E, F, and G constitute the peripheral sector of the complex.

It localises to the cell inner membrane. The enzyme catalyses a quinone + NADH + 5 H(+)(in) = a quinol + NAD(+) + 4 H(+)(out). Functionally, NDH-1 shuttles electrons from NADH, via FMN and iron-sulfur (Fe-S) centers, to quinones in the respiratory chain. The immediate electron acceptor for the enzyme in this species is believed to be ubiquinone. Couples the redox reaction to proton translocation (for every two electrons transferred, four hydrogen ions are translocated across the cytoplasmic membrane), and thus conserves the redox energy in a proton gradient. This is NADH-quinone oxidoreductase subunit C from Ruegeria sp. (strain TM1040) (Silicibacter sp.).